Here is a 356-residue protein sequence, read N- to C-terminus: Carbohydrate sulfotransferase 10 (356 aa).

Residues 1-6 (MHHQWL) are Cytoplasmic-facing. Residues 7 to 27 (LLAACFWVIFMFMVASKFITL) traverse the membrane as a helical; Signal-anchor for type II membrane protein segment. Residues 28–356 (TFKDPDVYSA…GYQKPDFLLN (329 aa)) lie on the Lumenal side of the membrane. Asn-99 carries N-linked (GlcNAc...) asparagine glycosylation. 3'-phosphoadenylyl sulfate contacts are provided by residues 127–133 (PKVGNTQ) and 189–197 (RDPFERLIS). N-linked (GlcNAc...) asparagine glycosylation is found at Asn-228 and Asn-316.

This sequence belongs to the sulfotransferase 2 family. In terms of tissue distribution, in fetal tissues, it is predominantly expressed in brain, and weakly expressed in lung, kidney and liver. In adult, it is highly expressed in brain, testis, ovary, expressed at intermediate level in heart, pancreas, skeletal muscle, spleen and thymus, and weakly expressed in other tissues. In brain, it is expressed at higher level in the frontal lobe.

It is found in the golgi apparatus membrane. The catalysed reaction is 3-O-{beta-D-GlcA-(1-&gt;[3)-alpha-D-Xyl-(1-&gt;3)-beta-D-GlcA-(1-&gt;](n)-4)-beta-D-Xyl-(1-&gt;4)-Rib-ol-P-Rib-ol-P-3-beta-D-GalNAc-(1-&gt;3)-beta-D-GlcNAc-(1-&gt;4)-O-6-P-alpha-D-Man}-L-Thr-[protein] + 3'-phosphoadenylyl sulfate = 3-O-{O-3-S-beta-D-GlcA-(1-&gt;[3)-alpha-D-Xyl-(1-&gt;3)-beta-D-GlcA-(1-&gt;](n)-4)-beta-D-Xyl-(1-&gt;4)-Rib-ol-P-Rib-ol-P-3-beta-D-GalNAc-(1-&gt;3)-beta-D-GlcNAc-(1-&gt;4)-O-6-P-alpha-D-Man}-L-Thr-[protein] + adenosine 3',5'-bisphosphate + H(+). It catalyses the reaction 17beta-estradiol 3-O-(beta-D-glucuronate) + 3'-phosphoadenylyl sulfate = 17beta-estradiol 3-O-(3-sulfo-beta-D-glucuronate) + adenosine 3',5'-bisphosphate + H(+). It carries out the reaction 17beta-estradiol 3-O-(beta-D-glucuronate) 17-sulfate + 3'-phosphoadenylyl sulfate = 17beta-estradiol 3-O-(3-sulfo-beta-D-glucuronate) 17-sulfate + adenosine 3',5'-bisphosphate + H(+). The enzyme catalyses 17beta-estradiol 17-O-(beta-D-glucuronate) + 3'-phosphoadenylyl sulfate = 17beta-estradiol 17-O-(3-sulfo-beta-D-glucuronate) + adenosine 3',5'-bisphosphate + H(+). The catalysed reaction is 16alpha,17beta-estriol 3-O-(beta-D-glucuronate) + 3'-phosphoadenylyl sulfate = 16alpha,17beta-estriol 3-O-(3-sulfo-beta-D-glucuronate) + adenosine 3',5'-bisphosphate + H(+). It catalyses the reaction 16alpha,17beta-estriol 16-O-(beta-D-glucuronate) + 3'-phosphoadenylyl sulfate = 16alpha,17beta-estriol 16-O-(3-sulfo-beta-D-glucuronate) + adenosine 3',5'-bisphosphate + H(+). It carries out the reaction 16alpha,17beta-estriol 17-O-(beta-D-glucuronate) + 3'-phosphoadenylyl sulfate = 16alpha,17beta-estriol 17-O-(3-sulfo-beta-D-glucuronate) + adenosine 3',5'-bisphosphate + H(+). The enzyme catalyses estrone 3-O-(beta-D-glucuronate) + 3'-phosphoadenylyl sulfate = estrone 3-O-(3-sulfo-beta-D-glucuronate) + adenosine 3',5'-bisphosphate + H(+). The catalysed reaction is 3alpha,20alpha-dihydroxy-5beta-pregnane 3-O-(beta-D-glucuronate) + 3'-phosphoadenylyl sulfate = 3alpha,20alpha-dihydroxy-5beta-pregnane 3-O-(3-sulfo-beta-D-glucuronate) + adenosine 3',5'-bisphosphate + H(+). It catalyses the reaction testosterone 17-O-(beta-D-glucuronate) + 3'-phosphoadenylyl sulfate = testosterone 17-O-(3-sulfo-beta-D-glucuronate) + adenosine 3',5'-bisphosphate + H(+). It carries out the reaction 3beta-androst-5-en-17-one 3-O-(beta-D-glucuronate) + 3'-phosphoadenylyl sulfate = 3beta-androst-5-en-17-one 3-O-(3-sulfo-beta-D-glucuronate) + adenosine 3',5'-bisphosphate + H(+). The enzyme catalyses 3alpha,17alpha-dihydroxy-5beta-androstane-11-one-17beta-carboxylate 3-O-(beta-D-glucuronate) + 3'-phosphoadenylyl sulfate = 3alpha,17alpha-dihydroxy-5beta-androstane-11-one-17beta-carboxylate 3-O-(3-sulfo-beta-D-glucuronate) + adenosine 3',5'-bisphosphate + H(+). The catalysed reaction is 3alpha-hydroxyetiocholan-17-one 3-O-(beta-D-glucuronate) + 3'-phosphoadenylyl sulfate = 3alpha-hydroxyetiocholan-17-one 3-O-(3-sulfo-beta-D-glucuronate) + adenosine 3',5'-bisphosphate + H(+). The protein operates within steroid metabolism. It functions in the pathway protein modification; carbohydrate sulfation. Its function is as follows. Catalyzes the transfer of sulfate from 3'-phosphoadenylyl sulfate (PAPS) to position 3 of terminal glucuronic acid of both protein- and lipid-linked oligosaccharides. Participates in biosynthesis of HNK-1 carbohydrate structure 3-O-sulfo-beta-D-GlcA-(1-&gt;3)-beta-D-Gal-(1-&gt;4)-D-GlcNAc-R, a sulfated glucuronyl-lactosaminyl residue carried by many neural recognition molecules, which is involved in cell interactions during ontogenetic development and in synaptic plasticity in the adult. May be indirectly involved in synapse plasticity of the hippocampus, via its role in HNK-1 biosynthesis. Sulfates terminal glucuronyl residue of the laminin globular (LG)-domain binding epitope on DAG1/alpha-dystroglycan and prevents further polymerization by LARGE1 glycosyltransferase. Likely defines the chain length of LG epitope, conferring binding specificity to extracellular matrix components. Plays a role in down-regulating the steroid hormones. Sulfates glucuronidated estrogens and androgens with an impact in hormone cycle and fertility. Has a preference for glucuronyl moiety at the 3-hydroxyl group of a sterol ring rather than the 17-hydroxyl group, showing high catalytic efficiency for 17beta-estradiol 3-O-(beta-D-glucuronate) and dehydroepiandrosterone 3-O-(beta-D-glucuronate) hormones. In Homo sapiens (Human), this protein is Carbohydrate sulfotransferase 10.